We begin with the raw amino-acid sequence, 100 residues long: Large ribosomal subunit protein bL27 (100 aa).

A propeptide spanning residues 1–13 (MNKLYWLTDLQLF) is cleaved from the precursor. Residues 18 to 29 (GVDSSKNGRDSN) are compositionally biased toward basic and acidic residues. Positions 18 to 39 (GVDSSKNGRDSNPKYLGAKLGD) are disordered.

The protein belongs to the bacterial ribosomal protein bL27 family. Post-translationally, the N-terminus is cleaved by ribosomal processing cysteine protease Prp.

The polypeptide is Large ribosomal subunit protein bL27 (Ureaplasma urealyticum serovar 10 (strain ATCC 33699 / Western)).